The chain runs to 1794 residues: Non-reducing polyketide synthase nscA (1794 aa).

Residues 19 to 256 are N-terminal acylcarrier protein transacylase domain (SAT); sequence DLKDLFRRLH…PLPVYDGLCH (238 aa). Residues 389 to 822 form the Ketosynthase family 3 (KS3) domain; the sequence is ASKLAIVGMA…GGNTTVLLED (434 aa). A compositionally biased stretch (basic and acidic residues) spans 428–440; the sequence is DRFDLNTHYDPTG. The tract at residues 428-448 is disordered; the sequence is DRFDLNTHYDPTGKTENATQT. Residues Cys-562, His-697, and His-740 each act as for beta-ketoacyl synthase activity in the active site. The malonyl-CoA:ACP transacylase (MAT) domain stretch occupies residues 927-1230; that stretch reads TFTGQGAYYS…SVISSCRRNE (304 aa). A product template (PT) domain region spans residues 1314–1633; sequence TSLVHQITTE…RLLMDRFFSP (320 aa). Residues 1318 to 1454 form an N-terminal hotdog fold region; sequence HQITTETVEA…CVVRFEDPAA (137 aa). Positions 1318 to 1628 constitute a PKS/mFAS DH domain; the sequence is HQITTETVEA…FRRVPRLLMD (311 aa). His-1350 functions as the Proton acceptor; for dehydratase activity in the catalytic mechanism. The tract at residues 1482–1628 is C-terminal hotdog fold; sequence ASKLSKPLAY…FRRVPRLLMD (147 aa). Asp-1539 functions as the Proton donor; for dehydratase activity in the catalytic mechanism. Residues 1637–1719 form a disordered region; it reads SHTEKQLQET…ATSDRGDSTD (83 aa). Residues 1644–1655 are compositionally biased toward polar residues; sequence QETAPSATNVKK. Residues 1717 to 1794 form the Carrier domain; the sequence is STDAGVVGQC…EMTAWLEEYC (78 aa). Ser-1754 bears the O-(pantetheine 4'-phosphoryl)serine mark.

Pantetheine 4'-phosphate serves as cofactor.

Its pathway is secondary metabolite biosynthesis. In terms of biological role, non-reducing polyketide synthase; part of the gene cluster that mediates the biosynthesis of neosartoricin, a prenylated anthracenone that exhibits T-cell antiproliferative activity, suggestive of a physiological role as an immunosuppressive agent. The non-reducing polyketide synthase nscA probably synthesizes and cyclizes the decaketide backbone. The hydrolase nscB then mediates the product release through hydrolysis followed by spontaneous decarboxylation. The prenyltransferase nscD catalyzes the addition of the dimethylallyl group to the aromatic C5. The FAD-dependent monooxygenase nscC is then responsible for the stereospecific hydroxylation at C2. There is no gene encoding O-acetyltransferase in the nsc gene cluster; thus, the last step of 2-O-acetylation leading to neosartoricin may be catalyzed by an unidentified O-acetyltransferase. In Aspergillus fumigatus (strain ATCC MYA-4609 / CBS 101355 / FGSC A1100 / Af293) (Neosartorya fumigata), this protein is Non-reducing polyketide synthase nscA.